The chain runs to 394 residues: RILP-like protein 1 (394 aa).

In terms of domain architecture, RH1 spans 2 to 89; that stretch reads EGISALEKNV…RLERMDRIEK (88 aa). Residues 68-312 are a coiled coil; sequence EMEELRLELD…KVFMLQEELA (245 aa). The RH2 domain occupies 282–347; it reads RPRFTLQELR…IPQESGIKRL (66 aa). The interval 318–337 is disordered; that stretch reads EADEEHKLPQSSPVIDSKAP.

This sequence belongs to the RILPL family.

It localises to the cytoplasm. The protein resides in the cytosol. Its subcellular location is the cytoskeleton. It is found in the microtubule organizing center. The protein localises to the centrosome. It localises to the cell projection. The protein resides in the cilium. Its function is as follows. Plays a role in the regulation of cell shape and polarity. Plays a role in cellular protein transport, including protein transport away from primary cilia. Neuroprotective protein. The protein is RILP-like protein 1 (rilpl1) of Xenopus tropicalis (Western clawed frog).